Reading from the N-terminus, the 739-residue chain is Phosphoribosylformylglycinamidine synthase subunit PurL (739 aa).

The active site involves histidine 53. ATP-binding residues include tyrosine 56 and lysine 95. Residue glutamate 97 coordinates Mg(2+). Substrate contacts are provided by residues serine 98–histidine 101 and arginine 120. Residue histidine 99 is the Proton acceptor of the active site. Aspartate 121 lines the Mg(2+) pocket. Glutamine 244 lines the substrate pocket. Aspartate 274 serves as a coordination point for Mg(2+). Glutamate 318–glutamine 320 serves as a coordination point for substrate. ATP contacts are provided by aspartate 501 and glycine 538. Asparagine 539 lines the Mg(2+) pocket. Residue serine 541 participates in substrate binding.

The protein belongs to the FGAMS family. Monomer. Part of the FGAM synthase complex composed of 1 PurL, 1 PurQ and 2 PurS subunits.

The protein resides in the cytoplasm. The enzyme catalyses N(2)-formyl-N(1)-(5-phospho-beta-D-ribosyl)glycinamide + L-glutamine + ATP + H2O = 2-formamido-N(1)-(5-O-phospho-beta-D-ribosyl)acetamidine + L-glutamate + ADP + phosphate + H(+). It functions in the pathway purine metabolism; IMP biosynthesis via de novo pathway; 5-amino-1-(5-phospho-D-ribosyl)imidazole from N(2)-formyl-N(1)-(5-phospho-D-ribosyl)glycinamide: step 1/2. In terms of biological role, part of the phosphoribosylformylglycinamidine synthase complex involved in the purines biosynthetic pathway. Catalyzes the ATP-dependent conversion of formylglycinamide ribonucleotide (FGAR) and glutamine to yield formylglycinamidine ribonucleotide (FGAM) and glutamate. The FGAM synthase complex is composed of three subunits. PurQ produces an ammonia molecule by converting glutamine to glutamate. PurL transfers the ammonia molecule to FGAR to form FGAM in an ATP-dependent manner. PurS interacts with PurQ and PurL and is thought to assist in the transfer of the ammonia molecule from PurQ to PurL. This chain is Phosphoribosylformylglycinamidine synthase subunit PurL, found in Listeria welshimeri serovar 6b (strain ATCC 35897 / DSM 20650 / CCUG 15529 / CIP 8149 / NCTC 11857 / SLCC 5334 / V8).